A 1164-amino-acid chain; its full sequence is DNA-directed RNA polymerase 133 kDa polypeptide (1164 aa).

Belongs to the RNA polymerase beta chain family. In terms of assembly, the DNA-dependent RNA polymerase used for intermediate and late genes expression consists of eight subunits 147 kDa, 133 kDa, 35 kDa, 30 kDa, 22 kDa, 19 kDa, 18 kDa and 7 kDa totalling more than 500 kDa in mass. The same holoenzyme, with the addition of the transcription-specificity factor RAP94, is used for early gene expression.

It is found in the virion. It catalyses the reaction RNA(n) + a ribonucleoside 5'-triphosphate = RNA(n+1) + diphosphate. Part of the DNA-dependent RNA polymerase which catalyzes the transcription of viral DNA into RNA using the four ribonucleoside triphosphates as substrates. Responsible for the transcription of early, intermediate and late genes. DNA-dependent RNA polymerase associates with the early transcription factor (ETF), itself composed of OPG118 and OPG133, thereby allowing the early genes transcription. Late transcription, and probably also intermediate transcription, require newly synthesized RNA polymerase. This chain is DNA-directed RNA polymerase 133 kDa polypeptide (OPG151), found in Homo sapiens (Human).